The sequence spans 3078 residues: Probable polyketide synthase 34 (3078 aa).

Positions 28 to 462 (SGDVAVIGIG…GSNVCLILSE (435 aa)) constitute a Ketosynthase family 3 (KS3) domain. Residues cysteine 200, histidine 339, and histidine 385 each act as for beta-ketoacyl synthase activity in the active site. Positions 665–698 (GVSADIIIGHSLGEISSSYCSGIIDFQTLCYLTY) are acyl/malonyl transferase. Serine 675 functions as the For acyl/malonyl transferase activity in the catalytic mechanism. The tract at residues 954-1083 (HEKIKNEGPS…GNFSLTKHNI (130 aa)) is N-terminal hotdog fold. The PKS/mFAS DH domain occupies 954 to 1264 (HEKIKNEGPS…CTIVGSNPDS (311 aa)). Histidine 995 acts as the Proton acceptor; for dehydratase activity in catalysis. Positions 1099–1264 (NFTSISKQDL…CTIVGSNPDS (166 aa)) are C-terminal hotdog fold. Aspartate 1171 (proton donor; for dehydratase activity) is an active-site residue. The interval 1375–1396 (NINNNNNNNNNNNNNNNNNSNG) is disordered. In terms of domain architecture, Carrier spans 2541–2618 (DNNEIIRSTI…QSIEIIKSAH (78 aa)). At serine 2578 the chain carries O-(pantetheine 4'-phosphoryl)serine. Disordered stretches follow at residues 2617–2640 (AHNN…NNNN) and 2739–2761 (NKGS…DNNS). A compositionally biased stretch (low complexity) spans 2619 to 2640 (NNNNNNNNNNNNNNNNNNNNNN). Positions 2621–2652 (NNNNNNNNNNNNNNNNNNNNLVKKEQQSLDEF) form a coiled coil.

Pantetheine 4'-phosphate is required as a cofactor.

Its function is as follows. Probable polyketide synthase. The sequence is that of Probable polyketide synthase 34 (pks34) from Dictyostelium discoideum (Social amoeba).